The following is a 979-amino-acid chain: Translation initiation factor IF-2 (979 aa).

A disordered region spans residues Val33–Glu391. 2 stretches are compositionally biased toward low complexity: residues Gln54 to Gln63 and Ala139 to Ala150. Pro residues predominate over residues Pro151 to Thr166. Over residues Pro234–Thr252 the composition is skewed to acidic residues. Composition is skewed to basic residues over residues Pro263–Arg278 and Thr294–Pro303. Over residues Gly314–Leu328 the composition is skewed to polar residues. Residues Lys371 to Val380 show a composition bias toward basic and acidic residues. The region spanning His468–Ser641 is the tr-type G domain. The tract at residues Gly477–Thr484 is G1. Position 477-484 (Gly477–Thr484) interacts with GTP. The tract at residues Gly502–His506 is G2. A G3 region spans residues Asp527–Gly530. GTP-binding positions include Asp527–His531 and Asn581–Asp584. Positions Asn581–Asp584 are G4. The segment at Ser617–Leu619 is G5.

This sequence belongs to the TRAFAC class translation factor GTPase superfamily. Classic translation factor GTPase family. IF-2 subfamily.

The protein localises to the cytoplasm. Its function is as follows. One of the essential components for the initiation of protein synthesis. Protects formylmethionyl-tRNA from spontaneous hydrolysis and promotes its binding to the 30S ribosomal subunits. Also involved in the hydrolysis of GTP during the formation of the 70S ribosomal complex. The polypeptide is Translation initiation factor IF-2 (Picosynechococcus sp. (strain ATCC 27264 / PCC 7002 / PR-6) (Agmenellum quadruplicatum)).